Consider the following 111-residue polypeptide: Aspartate 1-decarboxylase (111 aa).

S25 (schiff-base intermediate with substrate; via pyruvic acid) is an active-site residue. S25 is subject to Pyruvic acid (Ser). T57 serves as a coordination point for substrate. The Proton donor role is filled by Y58. Substrate is bound at residue 73 to 75 (GPA).

It belongs to the PanD family. Heterooctamer of four alpha and four beta subunits. Pyruvate serves as cofactor. In terms of processing, is synthesized initially as an inactive proenzyme, which is activated by self-cleavage at a specific serine bond to produce a beta-subunit with a hydroxyl group at its C-terminus and an alpha-subunit with a pyruvoyl group at its N-terminus.

The protein localises to the cytoplasm. It catalyses the reaction L-aspartate + H(+) = beta-alanine + CO2. The protein operates within cofactor biosynthesis; (R)-pantothenate biosynthesis; beta-alanine from L-aspartate: step 1/1. Its function is as follows. Catalyzes the pyruvoyl-dependent decarboxylation of aspartate to produce beta-alanine. The sequence is that of Aspartate 1-decarboxylase from Coxiella burnetii (strain RSA 493 / Nine Mile phase I).